Reading from the N-terminus, the 70-residue chain is Acyl carrier protein (70 aa).

Positions 2–70 constitute a Carrier domain; sequence SDIADRVKKI…ETIQTFGDAP (69 aa). An O-(pantetheine 4'-phosphoryl)serine modification is found at Ser-37.

Belongs to the acyl carrier protein (ACP) family. 4'-phosphopantetheine is transferred from CoA to a specific serine of apo-ACP by AcpS. This modification is essential for activity because fatty acids are bound in thioester linkage to the sulfhydryl of the prosthetic group.

It localises to the cytoplasm. Its pathway is lipid metabolism; fatty acid biosynthesis. In terms of biological role, carrier of the growing fatty acid chain in fatty acid biosynthesis. This Cereibacter sphaeroides (Rhodobacter sphaeroides) protein is Acyl carrier protein.